We begin with the raw amino-acid sequence, 307 residues long: Pantothenate kinase (307 aa).

90–97 (GSVAVGKS) is an ATP binding site.

The protein belongs to the prokaryotic pantothenate kinase family.

It localises to the cytoplasm. It catalyses the reaction (R)-pantothenate + ATP = (R)-4'-phosphopantothenate + ADP + H(+). Its pathway is cofactor biosynthesis; coenzyme A biosynthesis; CoA from (R)-pantothenate: step 1/5. This is Pantothenate kinase from Limosilactobacillus fermentum (strain NBRC 3956 / LMG 18251) (Lactobacillus fermentum).